Consider the following 398-residue polypeptide: Exodeoxyribonuclease 7 large subunit (398 aa).

The protein belongs to the XseA family. In terms of assembly, heterooligomer composed of large and small subunits.

It is found in the cytoplasm. The catalysed reaction is Exonucleolytic cleavage in either 5'- to 3'- or 3'- to 5'-direction to yield nucleoside 5'-phosphates.. In terms of biological role, bidirectionally degrades single-stranded DNA into large acid-insoluble oligonucleotides, which are then degraded further into small acid-soluble oligonucleotides. The polypeptide is Exodeoxyribonuclease 7 large subunit (Salinibacter ruber (strain DSM 13855 / M31)).